Consider the following 620-residue polypeptide: Protein regulator of cytokinesis 1 (620 aa).

Residues 1–303 (MRRSEVLAEE…IEAIRVELVQ (303 aa)) are required for the interaction with KIF4A. The tract at residues 1 to 341 (MRRSEVLAEE…QLHDAEIVRL (341 aa)) is dimerization. 3 coiled-coil regions span residues 96 to 133 (ILQL…ELCE), 211 to 304 (SLEN…LVQY), and 383 to 463 (GNLL…TEML). Positions 342–466 (KNYYEVHKEL…QTETEMLYGS (125 aa)) are spectrin-fold. Residues 446–459 (AKQERQLKNKKQTE) show a composition bias toward basic and acidic residues. Residues 446-488 (AKQERQLKNKKQTETEMLYGSAPRTPSKRRGLAPNTPGKARKL) form a disordered region. Residues 467-620 (APRTPSKRRG…GILNSTNIQS (154 aa)) form a unstructured, Arg/Lys rich region. A phosphothreonine; by CDK1 mark is found at threonine 470 and threonine 481. Residues serine 513, arginine 541, and serine 571 each carry the phosphoserine modification. Positions 517 to 545 (RLPPSGSKPVAASTCSGKKTPRTGRHGAN) are disordered. A Phosphothreonine modification is found at threonine 578. Positions 600 to 620 (LSKASKSDATSGILNSTNIQS) are disordered. A compositionally biased stretch (polar residues) spans 606–620 (SDATSGILNSTNIQS). At threonine 616 the chain carries Phosphothreonine; by PLK1.

This sequence belongs to the MAP65/ASE1 family. As to quaternary structure, homodimer. Interacts with the C-terminal Rho-GAP domain and the basic region of RACGAP1. The interaction with RACGAP1 inhibits its GAP activity towards CDC42 in vitro, which may be required for maintaining normal spindle morphology. Interacts (via N-terminus) with the C-terminus of CENPE (via C-terminus); the interaction occurs during late mitosis. Interacts (via N-terminus) with KIF4A (via C-terminus); the interaction is required for the progression of mitosis. Interacts (via N-terminus) with KIF23 (via C-terminus); the interaction occurs during late mitosis. Interacts with KIF14 and KIF20A. Interacts with PLK1. Interacts with KIF20B. Interacts with CCDC66. In terms of processing, phosphorylation by CDK1 in early mitosis holds PRC1 in an inactive monomeric state, during the metaphase to anaphase transition, PRC1 is dephosphorylated, promoting interaction with KIF4A, which then translocates PRC1 along mitotic spindles to the plus ends of antiparallel interdigitating microtubules. Dephosphorylation also promotes MT-bundling activity by allowing dimerization. Phosphorylation by CDK1 prevents PLK1-binding: upon degradation of CDK1 at anaphase and dephosphorylation, it is then phosphorylated by PLK1, leading to cytokinesis. In terms of tissue distribution, overexpressed in bladder cancer cells.

It localises to the nucleus. The protein localises to the cytoplasm. Its subcellular location is the cytoskeleton. It is found in the spindle pole. The protein resides in the midbody. It localises to the chromosome. Key regulator of cytokinesis that cross-links antiparrallel microtubules at an average distance of 35 nM. Essential for controlling the spatiotemporal formation of the midzone and successful cytokinesis. Required for KIF14 localization to the central spindle and midbody. Required to recruit PLK1 to the spindle. Stimulates PLK1 phosphorylation of RACGAP1 to allow recruitment of ECT2 to the central spindle. Acts as an oncogene for promoting bladder cancer cells proliferation, apoptosis inhibition and carcinogenic progression. This chain is Protein regulator of cytokinesis 1, found in Homo sapiens (Human).